Consider the following 235-residue polypeptide: Transcriptional regulatory protein WalR (235 aa).

The 114-residue stretch at 4–117 (KILVVDDEKP…ELLARVKANL (114 aa)) folds into the Response regulatory domain. The residue at position 53 (D53) is a 4-aspartylphosphate. Positions 132 to 231 (SNEIHIGSLV…RRGVGYYLRN (100 aa)) form a DNA-binding region, ompR/PhoB-type.

Homodimer. Phosphorylated by WalK.

It localises to the cytoplasm. In terms of biological role, member of the two-component regulatory system WalK/WalR involved in the regulation of the ftsAZ operon, the yocH, ykvT, cwlO, lytE, ydjM, yjeA, yoeB genes and the tagAB and tagDEF operons. Binds to the ftsAZ P1 promoter sequence in vitro. WalR has been shown to directly bind to the regulatory regions of yocH, ykvT, tagAB/tagDEF. Activates cwlO, lytE and ydjM and represses yoeB and yjeA. This Bacillus subtilis (strain 168) protein is Transcriptional regulatory protein WalR.